We begin with the raw amino-acid sequence, 145 residues long: MVAFSDKQEGLVNGAYEAFKADIPKYSVVFYTTILEKAPAAKNLFSFLANGVDATNPKLTGHAEKLFGLVRDSAAQLRASGGVVADAALGAVHSQKAVNDAQFVVVKEALVKTLKEAVGDKWSDELGTAVELAYDELAAAIKKAY.

The Globin domain occupies 3–145 (AFSDKQEGLV…ELAAAIKKAY (143 aa)). 2 positions are modified to nitrated tyrosine: Tyr-26 and Tyr-31. A heme b-binding site is contributed by Ser-46. A Phosphoserine modification is found at Ser-46. His-62 provides a ligand contact to O2. Heme b contacts are provided by Lys-65, His-93, and Lys-96. A Nitrated tyrosine modification is found at Tyr-134.

This sequence belongs to the plant globin family. As to quaternary structure, monomer. Nitrated in effective nodules and particularly in hypoxic conditions; this mechanism may play a protective role in the symbiosis by buffering toxic peroxynitrite NO(2)(-). Nitration level decrease during nodule senescence. Post-translationally, phosphorylation at Ser-46 disrupts the molecular environment of its porphyrin ring oxygen binding pocket, thus leading to a reduced oxygen consumption and to the delivery of oxygen O(2) to symbiosomes. In terms of tissue distribution, root nodules.

It is found in the cytoplasm. It localises to the cytosol. The protein resides in the nucleus. Its function is as follows. Leghemoglobin that reversibly binds oxygen O(2) through a pentacoordinated heme iron. In root nodules, facilitates the diffusion of oxygen to the bacteroids while preventing the bacterial nitrogenase from being inactivated by buffering dioxygen, nitric oxide and carbon monoxide, and promoting the formation of reactive oxygen species (ROS, e.g. H(2)O(2)). This role is essential for symbiotic nitrogen fixation (SNF). This is Leghemoglobin-2 from Vigna unguiculata (Cowpea).